We begin with the raw amino-acid sequence, 307 residues long: Ubiquitin recognition factor in ER-associated degradation protein 1 (307 aa).

M1 carries the N-acetylmethionine modification. A phosphoserine mark is found at S129, S231, S245, S247, and S299. Disordered regions lie at residues 230–255 (GSGNRLDGKKKGVEPSPSPIKPGDIK) and 282–307 (EEDEAGGRFVAFSGEGQSLRKKGRKP).

The protein belongs to the UFD1 family. In terms of assembly, interacts with USP13. Heterodimer with NPLOC4, this heterodimer binds VCP and inhibits Golgi membrane fusion. Interacts with ZFAND2B; probably through VCP.

The protein localises to the nucleus. Its subcellular location is the cytoplasm. The protein resides in the cytosol. The protein operates within protein degradation; proteasomal ubiquitin-dependent pathway. In terms of biological role, essential component of the ubiquitin-dependent proteolytic pathway which degrades ubiquitin fusion proteins. The ternary complex containing UFD1, VCP and NPLOC4 binds ubiquitinated proteins and is necessary for the export of misfolded proteins from the ER to the cytoplasm, where they are degraded by the proteasome. The NPLOC4-UFD1-VCP complex regulates spindle disassembly at the end of mitosis and is necessary for the formation of a closed nuclear envelope. It may be involved in the development of some ectoderm-derived structures. Acts as a negative regulator of type I interferon production via the complex formed with VCP and NPLOC4, which binds to RIGI and recruits RNF125 to promote ubiquitination and degradation of RIGI. The polypeptide is Ubiquitin recognition factor in ER-associated degradation protein 1 (Rattus norvegicus (Rat)).